Reading from the N-terminus, the 100-residue chain is Urease subunit gamma (100 aa).

Belongs to the urease gamma subunit family. As to quaternary structure, heterotrimer of UreA (gamma), UreB (beta) and UreC (alpha) subunits. Three heterotrimers associate to form the active enzyme.

The protein resides in the cytoplasm. The catalysed reaction is urea + 2 H2O + H(+) = hydrogencarbonate + 2 NH4(+). The protein operates within nitrogen metabolism; urea degradation; CO(2) and NH(3) from urea (urease route): step 1/1. The protein is Urease subunit gamma of Rhizobium etli (strain ATCC 51251 / DSM 11541 / JCM 21823 / NBRC 15573 / CFN 42).